Reading from the N-terminus, the 299-residue chain is Tetrahydromethanopterin S-methyltransferase subunit E (299 aa).

6 consecutive transmembrane segments (helical) span residues 57 to 77 (AISG…SVAW), 80 to 100 (INAG…AAIV), 133 to 153 (IGPI…AAYL), 158 to 178 (LGNP…VGAI), 237 to 257 (GLCF…GNII), and 261 to 281 (LVTK…AAMI).

The protein belongs to the MtrE family. In terms of assembly, the complex is composed of 8 subunits; MtrA, MtrB, MtrC, MtrD, MtrE, MtrF, MtrG and MtrH.

The protein resides in the cell membrane. The enzyme catalyses 5-methyl-5,6,7,8-tetrahydromethanopterin + coenzyme M + 2 Na(+)(in) = 5,6,7,8-tetrahydromethanopterin + methyl-coenzyme M + 2 Na(+)(out). It functions in the pathway one-carbon metabolism; methanogenesis from CO(2); methyl-coenzyme M from 5,10-methylene-5,6,7,8-tetrahydromethanopterin: step 2/2. Its function is as follows. Part of a complex that catalyzes the formation of methyl-coenzyme M and tetrahydromethanopterin from coenzyme M and methyl-tetrahydromethanopterin. This is an energy-conserving, sodium-ion translocating step. The sequence is that of Tetrahydromethanopterin S-methyltransferase subunit E from Methanococcus vannielii (strain ATCC 35089 / DSM 1224 / JCM 13029 / OCM 148 / SB).